The primary structure comprises 115 residues: NADH-ubiquinone oxidoreductase chain 3 (115 aa).

Helical transmembrane passes span 4–24 (LLTMLTNITLSTLLISIAFWL), 55–75 (FFLVAITFLLFDLEIALLLPI), and 84–104 (INTMTLTAFILVSILALGLAY).

It belongs to the complex I subunit 3 family. In terms of assembly, core subunit of respiratory chain NADH dehydrogenase (Complex I) which is composed of 45 different subunits. Interacts with TMEM186. Interacts with TMEM242.

Its subcellular location is the mitochondrion inner membrane. It carries out the reaction a ubiquinone + NADH + 5 H(+)(in) = a ubiquinol + NAD(+) + 4 H(+)(out). Functionally, core subunit of the mitochondrial membrane respiratory chain NADH dehydrogenase (Complex I) which catalyzes electron transfer from NADH through the respiratory chain, using ubiquinone as an electron acceptor. Essential for the catalytic activity of complex I. The protein is NADH-ubiquinone oxidoreductase chain 3 of Neotoma lepida (Desert woodrat).